We begin with the raw amino-acid sequence, 259 residues long: Proteasome subunit beta type-4 (259 aa).

This sequence belongs to the peptidase T1B family. The 26S proteasome consists of a 20S proteasome core and two 19S regulatory subunits. The 20S proteasome core is composed of 28 subunits that are arranged in four stacked rings, resulting in a barrel-shaped structure. The two end rings are each formed by seven alpha subunits, and the two central rings are each formed by seven beta subunits. The catalytic chamber with the active sites is on the inside of the barrel.

Its subcellular location is the cytoplasm. The protein localises to the nucleus. In terms of biological role, non-catalytic component of the proteasome, a multicatalytic proteinase complex which is characterized by its ability to cleave peptides with Arg, Phe, Tyr, Leu, and Glu adjacent to the leaving group at neutral or slightly basic pH. The proteasome has an ATP-dependent proteolytic activity. This Dictyostelium discoideum (Social amoeba) protein is Proteasome subunit beta type-4 (psmB4-1).